We begin with the raw amino-acid sequence, 522 residues long: Transactivator/viroplasmin protein (522 aa).

Positions 487–500 (KDASTDRGTTDKDG) are enriched in basic and acidic residues. The segment at 487 to 522 (KDASTDRGTTDKDGPPPTRSIVEKEDVPTTSSKQVD) is disordered.

The protein belongs to the caulimoviridae viroplasmin family.

The protein localises to the host cytoplasm. In terms of biological role, enhances the ribosomal termination-reinitiation event leading to the translation of major open reading frames on the polycistronic viral RNAs. The polypeptide is Transactivator/viroplasmin protein (Arabidopsis thaliana (Mouse-ear cress)).